Here is a 426-residue protein sequence, read N- to C-terminus: Serine hydroxymethyltransferase (426 aa).

(6S)-5,6,7,8-tetrahydrofolate-binding positions include Leu122 and 126 to 128 (GHL). Lys231 is modified (N6-(pyridoxal phosphate)lysine). Residues Glu247 and 355–357 (SPF) each bind (6S)-5,6,7,8-tetrahydrofolate.

Belongs to the SHMT family. In terms of assembly, homodimer. It depends on pyridoxal 5'-phosphate as a cofactor.

The protein resides in the cytoplasm. The enzyme catalyses (6R)-5,10-methylene-5,6,7,8-tetrahydrofolate + glycine + H2O = (6S)-5,6,7,8-tetrahydrofolate + L-serine. Its pathway is one-carbon metabolism; tetrahydrofolate interconversion. It participates in amino-acid biosynthesis; glycine biosynthesis; glycine from L-serine: step 1/1. In terms of biological role, catalyzes the reversible interconversion of serine and glycine with tetrahydrofolate (THF) serving as the one-carbon carrier. This reaction serves as the major source of one-carbon groups required for the biosynthesis of purines, thymidylate, methionine, and other important biomolecules. Also exhibits THF-independent aldolase activity toward beta-hydroxyamino acids, producing glycine and aldehydes, via a retro-aldol mechanism. The chain is Serine hydroxymethyltransferase from Cyanothece sp. (strain PCC 7425 / ATCC 29141).